The sequence spans 486 residues: Glutamate--tRNA ligase (486 aa).

The 'HIGH' region motif lies at 11–21 (PSPTGLLHIGN). The 'KMSKS' region motif lies at 255–259 (KLSKR). Residue Lys258 participates in ATP binding.

This sequence belongs to the class-I aminoacyl-tRNA synthetase family. Glutamate--tRNA ligase type 1 subfamily. In terms of assembly, monomer.

Its subcellular location is the cytoplasm. The enzyme catalyses tRNA(Glu) + L-glutamate + ATP = L-glutamyl-tRNA(Glu) + AMP + diphosphate. Its function is as follows. Catalyzes the attachment of glutamate to tRNA(Glu) in a two-step reaction: glutamate is first activated by ATP to form Glu-AMP and then transferred to the acceptor end of tRNA(Glu). The polypeptide is Glutamate--tRNA ligase (Streptococcus pneumoniae (strain Hungary19A-6)).